Consider the following 85-residue polypeptide: ATP synthase subunit c (85 aa).

2 helical membrane-spanning segments follow: residues 10 to 30 (GLALLGKYLGAGLCMGIGAIG) and 65 to 85 (AVAETTGIYSLLIAFMILLVV).

It belongs to the ATPase C chain family. F-type ATPases have 2 components, F(1) - the catalytic core - and F(0) - the membrane proton channel. F(1) has five subunits: alpha(3), beta(3), gamma(1), delta(1), epsilon(1). F(0) has three main subunits: a(1), b(2) and c(10-14). The alpha and beta chains form an alternating ring which encloses part of the gamma chain. F(1) is attached to F(0) by a central stalk formed by the gamma and epsilon chains, while a peripheral stalk is formed by the delta and b chains.

It is found in the cell inner membrane. Functionally, f(1)F(0) ATP synthase produces ATP from ADP in the presence of a proton or sodium gradient. F-type ATPases consist of two structural domains, F(1) containing the extramembraneous catalytic core and F(0) containing the membrane proton channel, linked together by a central stalk and a peripheral stalk. During catalysis, ATP synthesis in the catalytic domain of F(1) is coupled via a rotary mechanism of the central stalk subunits to proton translocation. In terms of biological role, key component of the F(0) channel; it plays a direct role in translocation across the membrane. A homomeric c-ring of between 10-14 subunits forms the central stalk rotor element with the F(1) delta and epsilon subunits. In Thermotoga maritima (strain ATCC 43589 / DSM 3109 / JCM 10099 / NBRC 100826 / MSB8), this protein is ATP synthase subunit c.